We begin with the raw amino-acid sequence, 101 residues long: NAD(P)H-quinone oxidoreductase subunit 4L, chloroplastic (101 aa).

A run of 3 helical transmembrane segments spans residues 2 to 22 (MLEH…YGLI), 32 to 52 (MCLE…SDFF), and 61 to 81 (IFSI…LAIV).

Belongs to the complex I subunit 4L family. NDH is composed of at least 16 different subunits, 5 of which are encoded in the nucleus.

Its subcellular location is the plastid. It is found in the chloroplast thylakoid membrane. The enzyme catalyses a plastoquinone + NADH + (n+1) H(+)(in) = a plastoquinol + NAD(+) + n H(+)(out). The catalysed reaction is a plastoquinone + NADPH + (n+1) H(+)(in) = a plastoquinol + NADP(+) + n H(+)(out). NDH shuttles electrons from NAD(P)H:plastoquinone, via FMN and iron-sulfur (Fe-S) centers, to quinones in the photosynthetic chain and possibly in a chloroplast respiratory chain. The immediate electron acceptor for the enzyme in this species is believed to be plastoquinone. Couples the redox reaction to proton translocation, and thus conserves the redox energy in a proton gradient. The sequence is that of NAD(P)H-quinone oxidoreductase subunit 4L, chloroplastic from Helianthus annuus (Common sunflower).